The following is a 171-amino-acid chain: Ly6/PLAUR domain-containing protein 6 (171 aa).

The first 25 residues, 1–25 (MEPSPALAWLLLLSLVADCLKAAQS), serve as a signal peptide directing secretion. Positions 47-141 (FKCFTCEKAA…PRNETDATFA (95 aa)) constitute a UPAR/Ly6 domain. Intrachain disulfides connect Cys-49–Cys-77, Cys-52–Cys-61, Cys-70–Cys-96, Cys-102–Cys-121, Cys-107–Cys-118, and Cys-122–Cys-127. The short motif at 88-90 (NSI) is the NxI motif element. Asn-134 and Asn-147 each carry an N-linked (GlcNAc...) asparagine glycan. Asn-147 carries GPI-anchor amidated asparagine lipidation. Residues 148–171 (QTNGHPHCVSVIVSCLWVWLGLTL) constitute a propeptide, removed in mature form.

Interacts with nicotinic acetylcholine receptors (nAChRs) including CHRNA3, CHRNA4, CHRNA5, CHRNA6, CHRNA7, CHRNB2 and CHRNB4. Interacts (via NxI motif) with LRP6. In terms of tissue distribution, detected in the frontal cortex and hippocampus (at protein level). Highly expressed in the brain and spinal cord, as well as dorsal root and trigeminal ganglia.

Its subcellular location is the secreted. It is found in the cytoplasm. The protein resides in the cell membrane. The protein localises to the synapse. It localises to the synaptosome. Its subcellular location is the membrane raft. It is found in the cell projection. The protein resides in the dendrite. The protein localises to the perikaryon. Acts as a modulator of nicotinic acetylcholine receptors (nAChRs) function in the brain. Inhibits nicotine-induced Ca(2+) influx through nAChRs. In vitro, specifically inhibits alpha-3:beta-4 and alpha-7 nAChR currents in an allosteric manner. Acts as a positive regulator of Wnt/beta-catenin signaling. In Mus musculus (Mouse), this protein is Ly6/PLAUR domain-containing protein 6 (Lypd6).